Here is an 88-residue protein sequence, read N- to C-terminus: Small ribosomal subunit protein uS17 (88 aa).

Belongs to the universal ribosomal protein uS17 family. As to quaternary structure, part of the 30S ribosomal subunit.

One of the primary rRNA binding proteins, it binds specifically to the 5'-end of 16S ribosomal RNA. This chain is Small ribosomal subunit protein uS17, found in Ectopseudomonas mendocina (strain ymp) (Pseudomonas mendocina).